Reading from the N-terminus, the 440-residue chain is UDP-N-acetylmuramoylalanine--D-glutamate ligase (440 aa).

Position 113 to 119 (113 to 119 (GTNGKST)) interacts with ATP.

The protein belongs to the MurCDEF family.

It localises to the cytoplasm. The catalysed reaction is UDP-N-acetyl-alpha-D-muramoyl-L-alanine + D-glutamate + ATP = UDP-N-acetyl-alpha-D-muramoyl-L-alanyl-D-glutamate + ADP + phosphate + H(+). The protein operates within cell wall biogenesis; peptidoglycan biosynthesis. Its function is as follows. Cell wall formation. Catalyzes the addition of glutamate to the nucleotide precursor UDP-N-acetylmuramoyl-L-alanine (UMA). The protein is UDP-N-acetylmuramoylalanine--D-glutamate ligase (murD) of Buchnera aphidicola subsp. Acyrthosiphon pisum (strain APS) (Acyrthosiphon pisum symbiotic bacterium).